The sequence spans 339 residues: Biotin synthase (339 aa).

The region spanning 51 to 278 (SEVELATLLS…KARVRLSAGR (228 aa)) is the Radical SAM core domain. The [4Fe-4S] cluster site is built by C66, C70, and C73. The [2Fe-2S] cluster site is built by C110, C141, C201, and R273.

It belongs to the radical SAM superfamily. Biotin synthase family. As to quaternary structure, homodimer. It depends on [4Fe-4S] cluster as a cofactor. The cofactor is [2Fe-2S] cluster.

It carries out the reaction (4R,5S)-dethiobiotin + (sulfur carrier)-SH + 2 reduced [2Fe-2S]-[ferredoxin] + 2 S-adenosyl-L-methionine = (sulfur carrier)-H + biotin + 2 5'-deoxyadenosine + 2 L-methionine + 2 oxidized [2Fe-2S]-[ferredoxin]. Its pathway is cofactor biosynthesis; biotin biosynthesis; biotin from 7,8-diaminononanoate: step 2/2. Functionally, catalyzes the conversion of dethiobiotin (DTB) to biotin by the insertion of a sulfur atom into dethiobiotin via a radical-based mechanism. In Herminiimonas arsenicoxydans, this protein is Biotin synthase.